We begin with the raw amino-acid sequence, 395 residues long: Bifunctional enzyme IspD/IspF (395 aa).

The segment at 1–237 (MRTWVLLLAA…DANEPQVTVP (237 aa)) is 2-C-methyl-D-erythritol 4-phosphate cytidylyltransferase. Residues 238–395 (CVGWGYDVHR…AAVTGLRPMP (158 aa)) are 2-C-methyl-D-erythritol 2,4-cyclodiphosphate synthase. Positions 244 and 246 each coordinate a divalent metal cation. 4-CDP-2-C-methyl-D-erythritol 2-phosphate contacts are provided by residues 244-246 (DVH) and 270-271 (HS). H278 is a binding site for a divalent metal cation. 4-CDP-2-C-methyl-D-erythritol 2-phosphate-binding positions include 292–294 (DIG), 297–301 (FPDSD), 368–371 (TTEE), and F375.

It in the N-terminal section; belongs to the IspD/TarI cytidylyltransferase family. IspD subfamily. In the C-terminal section; belongs to the IspF family. It depends on a divalent metal cation as a cofactor.

It catalyses the reaction 2-C-methyl-D-erythritol 4-phosphate + CTP + H(+) = 4-CDP-2-C-methyl-D-erythritol + diphosphate. It carries out the reaction 4-CDP-2-C-methyl-D-erythritol 2-phosphate = 2-C-methyl-D-erythritol 2,4-cyclic diphosphate + CMP. The protein operates within isoprenoid biosynthesis; isopentenyl diphosphate biosynthesis via DXP pathway; isopentenyl diphosphate from 1-deoxy-D-xylulose 5-phosphate: step 2/6. It participates in isoprenoid biosynthesis; isopentenyl diphosphate biosynthesis via DXP pathway; isopentenyl diphosphate from 1-deoxy-D-xylulose 5-phosphate: step 4/6. In terms of biological role, bifunctional enzyme that catalyzes the formation of 4-diphosphocytidyl-2-C-methyl-D-erythritol from CTP and 2-C-methyl-D-erythritol 4-phosphate (MEP) (IspD), and catalyzes the conversion of 4-diphosphocytidyl-2-C-methyl-D-erythritol 2-phosphate (CDP-ME2P) to 2-C-methyl-D-erythritol 2,4-cyclodiphosphate (ME-CPP) with a corresponding release of cytidine 5-monophosphate (CMP) (IspF). This chain is Bifunctional enzyme IspD/IspF, found in Nitratidesulfovibrio vulgaris (strain ATCC 29579 / DSM 644 / CCUG 34227 / NCIMB 8303 / VKM B-1760 / Hildenborough) (Desulfovibrio vulgaris).